The primary structure comprises 315 residues: Prephenate dehydratase (315 aa).

The region spanning 3-189 (RIAYLGPEGT…ARTRFVLVGP (187 aa)) is the Prephenate dehydratase domain. In terms of domain architecture, ACT spans 203 to 280 (SVVLRIDNAP…ADVRYLGSWP (78 aa)).

Homodimer.

The catalysed reaction is prephenate + H(+) = 3-phenylpyruvate + CO2 + H2O. It participates in amino-acid biosynthesis; L-phenylalanine biosynthesis; phenylpyruvate from prephenate: step 1/1. The polypeptide is Prephenate dehydratase (pheA) (Mycobacterium avium (strain 104)).